Reading from the N-terminus, the 274-residue chain is NAD(P)H-quinone oxidoreductase subunit K, chloroplastic (274 aa).

2 stretches are compositionally biased toward polar residues: residues 1–10 and 18–27; these read MVINQKNLSS and SGSQSSTKAD. Residues 1–27 are disordered; sequence MVINQKNLSSPVAPYDKSGSQSSTKAD. Cysteine 90, cysteine 91, cysteine 155, and cysteine 186 together coordinate [4Fe-4S] cluster.

It belongs to the complex I 20 kDa subunit family. NDH is composed of at least 16 different subunits, 5 of which are encoded in the nucleus. [4Fe-4S] cluster serves as cofactor.

The protein resides in the plastid. It is found in the chloroplast thylakoid membrane. It carries out the reaction a plastoquinone + NADH + (n+1) H(+)(in) = a plastoquinol + NAD(+) + n H(+)(out). The enzyme catalyses a plastoquinone + NADPH + (n+1) H(+)(in) = a plastoquinol + NADP(+) + n H(+)(out). Its function is as follows. NDH shuttles electrons from NAD(P)H:plastoquinone, via FMN and iron-sulfur (Fe-S) centers, to quinones in the photosynthetic chain and possibly in a chloroplast respiratory chain. The immediate electron acceptor for the enzyme in this species is believed to be plastoquinone. Couples the redox reaction to proton translocation, and thus conserves the redox energy in a proton gradient. The chain is NAD(P)H-quinone oxidoreductase subunit K, chloroplastic from Chlorokybus atmophyticus (Soil alga).